Here is a 753-residue protein sequence, read N- to C-terminus: 5-methyltetrahydropteroyltriglutamate--homocysteine methyltransferase (753 aa).

Residues 17-20 and Lys-117 each bind 5-methyltetrahydropteroyltri-L-glutamate; that span reads RELK. Residues 431 to 433 and Glu-484 each bind L-homocysteine; that span reads IGS. L-methionine is bound by residues 431–433 and Glu-484; that span reads IGS. Residues 515–516 and Trp-561 contribute to the 5-methyltetrahydropteroyltri-L-glutamate site; that span reads RC. Asp-599 lines the L-homocysteine pocket. Residue Asp-599 coordinates L-methionine. Glu-605 lines the 5-methyltetrahydropteroyltri-L-glutamate pocket. Positions 641, 643, and 665 each coordinate Zn(2+). The active-site Proton donor is His-694. Residue Cys-726 coordinates Zn(2+).

This sequence belongs to the vitamin-B12 independent methionine synthase family. Zn(2+) serves as cofactor.

The catalysed reaction is 5-methyltetrahydropteroyltri-L-glutamate + L-homocysteine = tetrahydropteroyltri-L-glutamate + L-methionine. It participates in amino-acid biosynthesis; L-methionine biosynthesis via de novo pathway; L-methionine from L-homocysteine (MetE route): step 1/1. Functionally, catalyzes the transfer of a methyl group from 5-methyltetrahydrofolate to homocysteine resulting in methionine formation. In Shigella sonnei (strain Ss046), this protein is 5-methyltetrahydropteroyltriglutamate--homocysteine methyltransferase.